Here is a 984-residue protein sequence, read N- to C-terminus: UPF0592 protein YDL073W (984 aa).

The interval 675 to 712 is disordered; sequence KNHKIMDGYEGGQENEDNDEDSEDSGSHKNKRKEGNSS. A compositionally biased stretch (acidic residues) spans 687-698; the sequence is QENEDNDEDSED.

Belongs to the UPF0592 family.

The chain is UPF0592 protein YDL073W from Saccharomyces cerevisiae (strain ATCC 204508 / S288c) (Baker's yeast).